We begin with the raw amino-acid sequence, 199 residues long: MQYPRPIAKLIEGFTRLPGIGPKTASRLAFHVLDMKEDDVLEFAKALVHAKRDLTYCSQCHNITDTDPCQICEDKHRDRTTICVVQESRDLIAMEKMREYTGLYHVLHGAISPMDGIGPEDIKIAELIKRLQDDESVKEVIVATNPTIEGEATAMYISRLIKPTGIKVTRLAHGLPVGGDLEYADEVTLSKAIEGRREL.

The C4-type zinc-finger motif lies at 57–72; the sequence is CSQCHNITDTDPCQIC. Residues 80-176 enclose the Toprim domain; that stretch reads TTICVVQESR…KVTRLAHGLP (97 aa).

It belongs to the RecR family.

Functionally, may play a role in DNA repair. It seems to be involved in an RecBC-independent recombinational process of DNA repair. It may act with RecF and RecO. This is Recombination protein RecR from Shouchella clausii (strain KSM-K16) (Alkalihalobacillus clausii).